The following is a 258-amino-acid chain: Synapse differentiation-inducing gene protein 1-like (258 aa).

Over 1–182 the chain is Extracellular; it reads MESLSELQNP…FIVIPPRDHL (182 aa). The helical transmembrane segment at 183–203 threads the bilayer; the sequence is GLAIFSMLCCFWPLGIAAFYF. The Cytoplasmic portion of the chain corresponds to 204–228; it reads SQGTSKAVTKGDFPLASIASRRALF. Residues 229 to 249 traverse the membrane as a helical segment; the sequence is LAALSITIGTGVYVGVVVALI. Residues 250 to 258 are Extracellular-facing; sequence AYLSKPGHI.

It belongs to the CD225/Dispanin family.

The protein localises to the membrane. Its subcellular location is the golgi apparatus. The protein resides in the cis-Golgi network. The protein is Synapse differentiation-inducing gene protein 1-like (syndig1l) of Danio rerio (Zebrafish).